We begin with the raw amino-acid sequence, 296 residues long: Probable endonuclease 4 (296 aa).

Zn(2+) is bound by residues histidine 68, histidine 108, glutamate 145, aspartate 179, histidine 182, histidine 216, aspartate 229, histidine 231, and glutamate 261.

The protein belongs to the AP endonuclease 2 family. The cofactor is Zn(2+).

It catalyses the reaction Endonucleolytic cleavage to 5'-phosphooligonucleotide end-products.. In terms of biological role, endonuclease IV plays a role in DNA repair. It cleaves phosphodiester bonds at apurinic or apyrimidinic (AP) sites, generating a 3'-hydroxyl group and a 5'-terminal sugar phosphate. This is Probable endonuclease 4 from Geobacter sulfurreducens (strain ATCC 51573 / DSM 12127 / PCA).